Reading from the N-terminus, the 183-residue chain is Putative 3-methyladenine DNA glycosylase (183 aa).

The protein belongs to the DNA glycosylase MPG family.

This chain is Putative 3-methyladenine DNA glycosylase, found in Rickettsia africae (strain ESF-5).